Reading from the N-terminus, the 588-residue chain is Phenol 2-monooxygenase fsqG (588 aa).

FAD is bound by residues 9–38 (DVLIIGAGPAGLTTANSFNGSNCRVRLIDW), 17–18 (PA), 37–39 (DWK), 45–50 (TGRADG), Tyr-232, 289–299 (ARHNRIFLAGD), Asp-299, and 309–313 (GQGMN). Residues Asp-49 and Tyr-232 each coordinate substrate.

The protein belongs to the PheA/TfdB FAD monooxygenase family. As to quaternary structure, homodimer. FAD is required as a cofactor.

It participates in secondary metabolite biosynthesis. In terms of biological role, phenol 2-monooxygenase; part of the gene cluster that mediates the biosynthesis of the isoquinoline alkaloids fumisoquin A, fumisoquin B and fumisoquin C; as well as small amounts of fumipyrrole as a shunt metabolite. The products of the cluster lead to a brown coloration and are important for growth and conidiation. The nonribosomal peptide synthetase-like protein fsqF, which lacks a canonical condensation domain, is required for addition of a serine-derived dehydroalanine moiety to activated tyrosine but is not essential for the subsequent steps leading to isoquinoline formation. A different enzyme, most likely the ATP-grasp enzyme fsqD, is responsible for activation of tyrosine. Three additional enzymes encoded by the fsq cluster, the N-methyltransferase fsqC, the phenol 2-monooxygenase fsqG and the FAD-dependent oxidase fsqB, catalyze the formation of the isoquinoline ring system in the fumisoquins. FsqB converts the fspF thiolation domain-bound (2S,4S,5S)-2-amino-6-(3,4-dihydroxyphenyl)-4-hydroxy-5-(methylamino)hexanoyl into isoquinoline. The cyclization most likely proceeds via a two-step mechanism, beginning with FAD-dependent oxidation of the methyl group to an iminium species followed by electrophilic attack on the deprotonated phenol. This Aspergillus fumigatus (strain ATCC MYA-4609 / CBS 101355 / FGSC A1100 / Af293) (Neosartorya fumigata) protein is Phenol 2-monooxygenase fsqG.